A 338-amino-acid polypeptide reads, in one-letter code: Aspartate-semialdehyde dehydrogenase (338 aa).

Residues 13-16 and 41-42 each bind NADP(+); these read SGAV and RS. Arginine 101 contributes to the phosphate binding site. The Acyl-thioester intermediate role is filled by cysteine 132. Glutamine 159 is a binding site for substrate. Residues 162–163 and proline 187 contribute to the NADP(+) site; that span reads SG. Position 216 (lysine 216) interacts with phosphate. A substrate-binding site is contributed by arginine 238. Catalysis depends on histidine 245, which acts as the Proton acceptor. NADP(+) is bound at residue asparagine 317.

The protein belongs to the aspartate-semialdehyde dehydrogenase family. As to quaternary structure, homodimer.

The catalysed reaction is L-aspartate 4-semialdehyde + phosphate + NADP(+) = 4-phospho-L-aspartate + NADPH + H(+). It participates in amino-acid biosynthesis; L-lysine biosynthesis via DAP pathway; (S)-tetrahydrodipicolinate from L-aspartate: step 2/4. The protein operates within amino-acid biosynthesis; L-methionine biosynthesis via de novo pathway; L-homoserine from L-aspartate: step 2/3. Its pathway is amino-acid biosynthesis; L-threonine biosynthesis; L-threonine from L-aspartate: step 2/5. Functionally, catalyzes the NADPH-dependent formation of L-aspartate-semialdehyde (L-ASA) by the reductive dephosphorylation of L-aspartyl-4-phosphate. The sequence is that of Aspartate-semialdehyde dehydrogenase from Shewanella sp. (strain DB6705).